Consider the following 106-residue polypeptide: Small ribosomal subunit protein uS10 (106 aa).

This sequence belongs to the universal ribosomal protein uS10 family. As to quaternary structure, part of the 30S ribosomal subunit.

Involved in the binding of tRNA to the ribosomes. The protein is Small ribosomal subunit protein uS10 of Pyrobaculum islandicum (strain DSM 4184 / JCM 9189 / GEO3).